The primary structure comprises 788 residues: Phosphoribosylformylglycinamidine synthase subunit PurL (788 aa).

Histidine 50 is an active-site residue. ATP contacts are provided by tyrosine 53 and lysine 92. Glutamate 94 provides a ligand contact to Mg(2+). Substrate is bound by residues 95–98 and arginine 117; that span reads SHNH. Histidine 96 acts as the Proton acceptor in catalysis. Mg(2+) is bound at residue aspartate 118. Glutamine 241 is a binding site for substrate. Mg(2+) is bound at residue aspartate 269. Position 313 to 315 (313 to 315) interacts with substrate; that stretch reads ESQ. Aspartate 524 and glycine 561 together coordinate ATP. Mg(2+) is bound at residue asparagine 562. Substrate is bound at residue serine 564.

Belongs to the FGAMS family. As to quaternary structure, monomer. Part of the FGAM synthase complex composed of 1 PurL, 1 PurQ and 2 PurS subunits.

The protein localises to the cytoplasm. It carries out the reaction N(2)-formyl-N(1)-(5-phospho-beta-D-ribosyl)glycinamide + L-glutamine + ATP + H2O = 2-formamido-N(1)-(5-O-phospho-beta-D-ribosyl)acetamidine + L-glutamate + ADP + phosphate + H(+). It participates in purine metabolism; IMP biosynthesis via de novo pathway; 5-amino-1-(5-phospho-D-ribosyl)imidazole from N(2)-formyl-N(1)-(5-phospho-D-ribosyl)glycinamide: step 1/2. Functionally, part of the phosphoribosylformylglycinamidine synthase complex involved in the purines biosynthetic pathway. Catalyzes the ATP-dependent conversion of formylglycinamide ribonucleotide (FGAR) and glutamine to yield formylglycinamidine ribonucleotide (FGAM) and glutamate. The FGAM synthase complex is composed of three subunits. PurQ produces an ammonia molecule by converting glutamine to glutamate. PurL transfers the ammonia molecule to FGAR to form FGAM in an ATP-dependent manner. PurS interacts with PurQ and PurL and is thought to assist in the transfer of the ammonia molecule from PurQ to PurL. The sequence is that of Phosphoribosylformylglycinamidine synthase subunit PurL from Nostoc punctiforme (strain ATCC 29133 / PCC 73102).